Consider the following 37-residue polypeptide: Neuropeptide Y2-like conopeptide (37 aa).

Tyrosine 37 carries the tyrosine amide modification.

It belongs to the NPY family. Expressed by the venom duct.

It is found in the secreted. Functionally, causes hyperactivity such as jumping, rapid circling and tail flicking, after intraventicular injection into mouse brain. This is Neuropeptide Y2-like conopeptide from Conus betulinus (Beech cone).